The primary structure comprises 1563 residues: Pentafunctional AROM polypeptide (1563 aa).

The 3-dehydroquinate synthase stretch occupies residues 1 to 382; sequence MAEPISNPTR…YEPKASVVED (382 aa). NAD(+) is bound by residues 48 to 50, 82 to 85, 113 to 115, and aspartate 118; these read DTN, EYSK, and GGV. Position 129 (arginine 129) interacts with 7-phospho-2-dehydro-3-deoxy-D-arabino-heptonate. NAD(+) is bound at residue 138–139; that stretch reads TT. Residues aspartate 145 and lysine 151 each coordinate 7-phospho-2-dehydro-3-deoxy-D-arabino-heptonate. Lysine 160 is an NAD(+) binding site. Residue asparagine 161 participates in 7-phospho-2-dehydro-3-deoxy-D-arabino-heptonate binding. NAD(+) contacts are provided by residues 178 to 181 and asparagine 189; that span reads FLNT. Glutamate 193 is a Zn(2+) binding site. 7-phospho-2-dehydro-3-deoxy-D-arabino-heptonate-binding positions include 193-196 and lysine 248; that span reads EVIK. The active-site Proton acceptor; for 3-dehydroquinate synthase activity is the glutamate 258. 7-phospho-2-dehydro-3-deoxy-D-arabino-heptonate-binding positions include 262 to 266 and histidine 269; that span reads RNLLN. Position 269 (histidine 269) interacts with Zn(2+). The Proton acceptor; for 3-dehydroquinate synthase activity role is filled by histidine 273. Positions 285 and 354 each coordinate 7-phospho-2-dehydro-3-deoxy-D-arabino-heptonate. Histidine 285 is a binding site for Zn(2+). Positions 395–834 are EPSP synthase; that stretch reads VFAGVPKDLN…WDTMSNYFKV (440 aa). Cysteine 816 functions as the For EPSP synthase activity in the catalytic mechanism. A shikimate kinase region spans residues 857 to 1051; the sequence is PKSIFIIGMR…KKKPHSFFVS (195 aa). 864–871 serves as a coordination point for ATP; sequence GMRGAGKS. Residues 1052–1265 form a 3-dehydroquinase region; the sequence is LTVPNVSKAL…AAPGQLSAAE (214 aa). Residue histidine 1168 is the Proton acceptor; for 3-dehydroquinate dehydratase activity of the active site. Lysine 1196 functions as the Schiff-base intermediate with substrate; for 3-dehydroquinate dehydratase activity in the catalytic mechanism. Positions 1278–1563 are shikimate dehydrogenase; sequence PRSFHLFGNP…TDAQAAVMGN (286 aa).

The protein in the N-terminal section; belongs to the sugar phosphate cyclases superfamily. Dehydroquinate synthase family. This sequence in the 2nd section; belongs to the EPSP synthase family. It in the 3rd section; belongs to the shikimate kinase family. In the 4th section; belongs to the type-I 3-dehydroquinase family. The protein in the C-terminal section; belongs to the shikimate dehydrogenase family. In terms of assembly, homodimer. The cofactor is Zn(2+).

The protein localises to the cytoplasm. The catalysed reaction is 7-phospho-2-dehydro-3-deoxy-D-arabino-heptonate = 3-dehydroquinate + phosphate. The enzyme catalyses 3-dehydroquinate = 3-dehydroshikimate + H2O. It catalyses the reaction shikimate + NADP(+) = 3-dehydroshikimate + NADPH + H(+). It carries out the reaction shikimate + ATP = 3-phosphoshikimate + ADP + H(+). The catalysed reaction is 3-phosphoshikimate + phosphoenolpyruvate = 5-O-(1-carboxyvinyl)-3-phosphoshikimate + phosphate. Its pathway is metabolic intermediate biosynthesis; chorismate biosynthesis; chorismate from D-erythrose 4-phosphate and phosphoenolpyruvate: step 2/7. It functions in the pathway metabolic intermediate biosynthesis; chorismate biosynthesis; chorismate from D-erythrose 4-phosphate and phosphoenolpyruvate: step 3/7. It participates in metabolic intermediate biosynthesis; chorismate biosynthesis; chorismate from D-erythrose 4-phosphate and phosphoenolpyruvate: step 4/7. The protein operates within metabolic intermediate biosynthesis; chorismate biosynthesis; chorismate from D-erythrose 4-phosphate and phosphoenolpyruvate: step 5/7. Its pathway is metabolic intermediate biosynthesis; chorismate biosynthesis; chorismate from D-erythrose 4-phosphate and phosphoenolpyruvate: step 6/7. The AROM polypeptide catalyzes 5 consecutive enzymatic reactions in prechorismate polyaromatic amino acid biosynthesis. This chain is Pentafunctional AROM polypeptide, found in Neurospora crassa (strain ATCC 24698 / 74-OR23-1A / CBS 708.71 / DSM 1257 / FGSC 987).